The chain runs to 210 residues: HTH-type transcriptional repressor ComR (210 aa).

The 61-residue stretch at 18 to 78 (VFDRDAALDK…AVLDRYIDRF (61 aa)) folds into the HTH tetR-type domain. The H-T-H motif DNA-binding region spans 41–60 (SLADLVEATGAKAPTLYAEF).

With respect to regulation, binding to the promoter region of BhsA/ComC is released in the presence of copper. Functionally, represses expression of BhsA/ComC by binding to its promoter region in the absence of copper. The protein is HTH-type transcriptional repressor ComR (comR) of Escherichia coli (strain K12).